The sequence spans 163 residues: 2-C-methyl-D-erythritol 2,4-cyclodiphosphate synthase (163 aa).

A divalent metal cation is bound by residues Asp-12 and His-14. 4-CDP-2-C-methyl-D-erythritol 2-phosphate-binding positions include 12-14 (DVH) and 38-39 (HS). An a divalent metal cation-binding site is contributed by His-46. 4-CDP-2-C-methyl-D-erythritol 2-phosphate-binding positions include 60–62 (DIG), 136–139 (TTSE), Phe-143, and Arg-146.

Belongs to the IspF family. In terms of assembly, homotrimer. It depends on a divalent metal cation as a cofactor.

The enzyme catalyses 4-CDP-2-C-methyl-D-erythritol 2-phosphate = 2-C-methyl-D-erythritol 2,4-cyclic diphosphate + CMP. It participates in isoprenoid biosynthesis; isopentenyl diphosphate biosynthesis via DXP pathway; isopentenyl diphosphate from 1-deoxy-D-xylulose 5-phosphate: step 4/6. In terms of biological role, involved in the biosynthesis of isopentenyl diphosphate (IPP) and dimethylallyl diphosphate (DMAPP), two major building blocks of isoprenoid compounds. Catalyzes the conversion of 4-diphosphocytidyl-2-C-methyl-D-erythritol 2-phosphate (CDP-ME2P) to 2-C-methyl-D-erythritol 2,4-cyclodiphosphate (ME-CPP) with a corresponding release of cytidine 5-monophosphate (CMP). The polypeptide is 2-C-methyl-D-erythritol 2,4-cyclodiphosphate synthase (Xanthomonas campestris pv. campestris (strain 8004)).